The primary structure comprises 427 residues: O-methyltransferase PaMT (427 aa).

S-adenosyl-L-methionine is bound by residues Trp-230 and Asp-281. His-326 serves as the catalytic Proton acceptor.

Belongs to the class I-like SAM-binding methyltransferase superfamily. Cation-independent O-methyltransferase family. COMT subfamily. S-adenosyl-L-methionine serves as cofactor.

The protein operates within mycotoxin biosynthesis. Functionally, O-methyltransferase; part of the 2 gene clusters that mediate the biosynthesis of fusicoccins, diterpene glucosides that display phytohormone-like activity and function as potent activators of plasma membrane H(+)-ATPases in plants by modifying 14-3-3 proteins and cause the plant disease constriction canker. The first step in the pathway is performed by the fusicoccadiene synthase PaFS that possesses both prenyl transferase and terpene cyclase activity, converting isopentenyl diphosphate and dimethylallyl diphosphate into geranylgeranyl diphosphate (GGDP) and successively converting GGDP into fusicocca-2,10(14)-diene, a precursor for fusicoccin H. The second step is the oxidation at the C-8 position by the cytochrome P450 monooxygenase PaP450-2 to yield fusicocca-2,10(14)-diene-8-beta-ol. The cytochrome P450 monooxygenase PaP450-1 then catalyzes the hydroxylation at the C-16 position to produce fusicocca-2,10(14)-diene-8-beta,16-diol. The dioxygenase fc-dox then catalyzes the 16-oxydation of fusicocca-2,10(14)-diene-8-beta,16-diol to yield an aldehyde (8-beta-hydroxyfusicocca-1,10(14)-dien-16-al). The short-chain dehydrogenase/reductase fc-sdr catalyzes the reduction of the aldehyde to yield fusicocca-1,10(14)-diene-8-beta,16-diol. The next step is the hydroxylation at C-9 performed by the cytochrome P450 monooxygenase PaP450-3 that leads to fusicoccin H aglycon which is glycosylated to fusicoccin H by the O-glycosyltransferase PaGT. Hydroxylation at C-12 by the cytochrome P450 monooxygenase PaP450-4 leads then to the production of fusicoccin Q and is followed by methylation by the O-methyltransferase PaMT to yield fusicoccin P. Fusicoccin P is further converted to fusicoccin J via prenylation by the O-glucose prenyltransferase PaPT. Cytochrome P450 monooxygenase PaP450-5 then performs hydroxylation at C-19 to yield dideacetyl-fusicoccin A which is acetylated to 3'-O-deacetyl-fusicoccin A by the O-acetyltransferase PaAT-2. Finally, a another acetylation by the O-acetyltransferase PaAT-1 yields fusicoccin A. The sequence is that of O-methyltransferase PaMT from Phomopsis amygdali (Fusicoccum amygdali).